Here is a 54-residue protein sequence, read N- to C-terminus: uncharacterized protein (54 aa).

Residues 1–28 (MDRKKDEIQRKYREQMREKKEREKEDGS) show a composition bias toward basic and acidic residues. A disordered region spans residues 1–29 (MDRKKDEIQRKYREQMREKKEREKEDGSS). The helical transmembrane segment at 31–51 (TFEIVVVLAIIILMFFFNSVF) threads the bilayer.

The protein resides in the cell membrane. This is an uncharacterized protein from Bacillus subtilis (strain 168).